We begin with the raw amino-acid sequence, 436 residues long: Exodeoxyribonuclease 7 large subunit (436 aa).

Residues 412-436 (PGGVMNKNSNTTDSTDNTENGTGEA) are disordered. The segment covering 417-436 (NKNSNTTDSTDNTENGTGEA) has biased composition (low complexity).

This sequence belongs to the XseA family. Heterooligomer composed of large and small subunits.

It localises to the cytoplasm. The enzyme catalyses Exonucleolytic cleavage in either 5'- to 3'- or 3'- to 5'-direction to yield nucleoside 5'-phosphates.. Its function is as follows. Bidirectionally degrades single-stranded DNA into large acid-insoluble oligonucleotides, which are then degraded further into small acid-soluble oligonucleotides. The polypeptide is Exodeoxyribonuclease 7 large subunit (Corynebacterium jeikeium (strain K411)).